The sequence spans 404 residues: MKIVSAEVFVTCPGRNFVTLKITTDSGLTGLGDATLNGRELPVASYLNDHVCPQLIGRDAHQIEDIWQYFYKGAYWRRGPVTMSAISAVDMALWDIKAKAANMPLYQLLGGASRTGVMVYCHTTGHSIDEVLDDYAKHRDQGFKAIRVQCGVPGMETTYGMAKGKGLAYEPATKGSLPEEQLWSTEKYLDFTPKLFEAVRDKFGFNEHLLHDMHHRLTPIEAARFGKSVEDYRLFWMEDPTPAENQACFRLIRQHTVTPIAVGEVFNSIWDCKQLIEEQLIDYIRTTITHAGGITGMRRIADFASLYQVRTGSHGPSDLSPICMAAALHFDLWVPNFGVQEYMGYSEQMLEVFPHSWTFDNGYMHPGEKPGLGIEFDEKLAAKYPYDPAYLPVARLEDGTLWNW.

Substrate-binding residues include Asn37 and His122. Tyr159 acts as the Proton donor/acceptor in catalysis. Asp212 serves as a coordination point for Mg(2+). His214 (proton donor/acceptor) is an active-site residue. Mg(2+) contacts are provided by Glu238 and Glu264. The substrate site is built by Glu264, Arg285, His314, Asp318, and Glu341.

The protein belongs to the mandelate racemase/muconate lactonizing enzyme family. GalD subfamily. Mg(2+) is required as a cofactor.

It catalyses the reaction D-mannonate = 2-dehydro-3-deoxy-D-gluconate + H2O. Functionally, has low D-mannonate dehydratase activity (in vitro), suggesting that this is not a physiological substrate and that it has no significant role in D-mannonate degradation in vivo. Has no detectable activity with a panel of 70 other acid sugars (in vitro). The protein is D-galactonate dehydratase family member PC1_0802 of Pectobacterium carotovorum subsp. carotovorum (strain PC1).